The sequence spans 146 residues: MKIYVDADACPVKDVIIFEATKAEIPVTLVTSFSHYSNAEQPKGVETIYVDSGADAADYRIMQLAQKEDLIVTQDYGLASLALAKGCIVLHHKGYKYTNENIDQLLQTRYLSAMVRKSGKRTKGPKPFTAEDKEKFRALFKSMIPL.

This sequence belongs to the UPF0178 family.

The sequence is that of UPF0178 protein BT9727_2823 from Bacillus thuringiensis subsp. konkukian (strain 97-27).